A 651-amino-acid polypeptide reads, in one-letter code: MGKKHKKHKSDKHLYEEYVEKPLKLVLKVGGNEVTELSTGSSGHDSSLFEDKNDHDKHKDRKRKKRKKGEKQIPGEEKGRKRRRVKEDKKKRDRDRVENEAEKDLQCHAPVRLDLPPEKPLTSSLAKQEEVEQTPLQEALNQLMRQLQRKDPSAFFSFPVTDFIAPGYSMIIKHPMDFSTMKEKIKNNDYQSIEELKDNFKLMCTNAMIYNKPETIYYKAAKKLLHSGMKILSQERIQSLKQSIDFMADLQKTRKQKDGTDTSQSGEDGGCWQREREDSGDAEAHAFKSPSKENKKKDKDMLEDKFKSNNLEREQEQLDRIVKESGGKLTRRLVNSQCEFERRKPDGTTTLGLLHPVDPIVGEPGYCPVRLGMTTGRLQSGVNTLQGFKEDKRNKVTPVLYLNYGPYSSYAPHYDSTFANISKDDSDLIYSTYGEDSDLPSDFSIHEFLATCQDYPYVMADSLLDVLTKGGHSRTLQEMEMSLPEDEGHTRTLDTAKEMEITEVEPPGRLDSSTQDRLIALKAVTNFGVPVEVFDSEEAEIFQKKLDETTRLLRELQEAQNERLSTRPPPNMICLLGPSYREMHLAEQVTNNLKELAQQVTPGDIVSTYGVRKAMGISIPSPVMENNFVDLTEDTEEPKKTDVAECGPGGS.

Residue Lys-21 forms a Glycyl lysine isopeptide (Lys-Gly) (interchain with G-Cter in SUMO2) linkage. The segment covering 35-45 has biased composition (polar residues); it reads TELSTGSSGHD. The disordered stretch occupies residues 35-132; it reads TELSTGSSGH…SSLAKQEEVE (98 aa). Positions 47–57 are enriched in basic and acidic residues; the sequence is SLFEDKNDHDK. A Glycyl lysine isopeptide (Lys-Gly) (interchain with G-Cter in SUMO2) cross-link involves residue Lys-52. A compositionally biased stretch (basic residues) spans 58-69; the sequence is HKDRKRKKRKKG. The Nuclear localization signal signature appears at 65-96; sequence KRKKGEKQIPGEEKGRKRRRVKEDKKKRDRDR. Residues 70-106 are compositionally biased toward basic and acidic residues; sequence EKQIPGEEKGRKRRRVKEDKKKRDRDRVENEAEKDLQ. Glycyl lysine isopeptide (Lys-Gly) (interchain with G-Cter in SUMO2) cross-links involve residues Lys-127, Lys-186, Lys-197, Lys-201, Lys-212, and Lys-241. A Bromo domain is found at 131–235; it reads VEQTPLQEAL…HSGMKILSQE (105 aa). The segment at 253–301 is disordered; that stretch reads TRKQKDGTDTSQSGEDGGCWQREREDSGDAEAHAFKSPSKENKKKDKDM. Basic and acidic residues predominate over residues 273 to 301; the sequence is QREREDSGDAEAHAFKSPSKENKKKDKDM. Residues Ser-279 and Ser-289 each carry the phosphoserine modification. Glycyl lysine isopeptide (Lys-Gly) (interchain with G-Cter in SUMO2) cross-links involve residues Lys-305 and Lys-307. The residue at position 328 (Lys-328) is an N6-acetyllysine. Lys-344 participates in a covalent cross-link: Glycyl lysine isopeptide (Lys-Gly) (interchain with G-Cter in SUMO2). Ser-380 bears the Phosphoserine mark. A Glycyl lysine isopeptide (Lys-Gly) (interchain with G-Cter in SUMO2) cross-link involves residue Lys-389. Ser-482 bears the Phosphoserine mark. Thr-514 carries the post-translational modification Phosphothreonine. Residues 536-567 adopt a coiled-coil conformation; the sequence is SEEAEIFQKKLDETTRLLRELQEAQNERLSTR. Ser-621 is subject to Phosphoserine.

As to quaternary structure, interacts with TRIM24, PTPN13 and DVL1. Identified in a complex with SMARCA4/BRG1, SMARCC1/BAF155, SMARCE1/BAF57, DPF2/BAF45D and ARID2, subunits of the SWI/SNF-B (PBAF) chromatin remodeling complex. Interacts with IRF2 and HNRPUL1. Interacts (via N-terminus) with TP53. Interacts (via C-terminus) with EP300. Interacts with BRCA1. Interacts (via bromo domain) with histone H3 (via N-terminus) acetylated at 'Lys-14' (H3K14ac). Has low affinity for histone H3 acetylated at 'Lys-9' (H3K9ac). Has the highest affinity for histone H3 that is acetylated both at 'Lys-9' (H3K9ac) and at 'Lys-14' (H3K14ac). Has very low affinity for non-acetylated histone H3. Interacts (via bromo domain) with histone H4 (via N-terminus) acetylated at 'Lys-8' (H3K8ac) (in vitro).

The protein resides in the nucleus. It localises to the chromosome. Its function is as follows. Acts both as coactivator and as corepressor. May play a role in chromatin remodeling. Activator of the Wnt signaling pathway in a DVL1-dependent manner by negatively regulating the GSK3B phosphotransferase activity. Induces dephosphorylation of GSK3B at 'Tyr-216'. Down-regulates TRIM24-mediated activation of transcriptional activation by AR. Transcriptional corepressor that down-regulates the expression of target genes. Binds to target promoters, leading to increased histone H3 acetylation at 'Lys-9' (H3K9ac). Binds to the ESR1 promoter. Recruits BRCA1 and POU2F1 to the ESR1 promoter. Coactivator for TP53-mediated activation of transcription of a set of target genes. Required for TP53-mediated cell-cycle arrest in response to oncogene activation. Promotes acetylation of TP53 at 'Lys-382', and thereby promotes efficient recruitment of TP53 to target promoters. Inhibits cell cycle progression from G1 to S phase. The protein is Bromodomain-containing protein 7 (BRD7) of Homo sapiens (Human).